Here is a 267-residue protein sequence, read N- to C-terminus: Regulatory protein VirG (267 aa).

The Response regulatory domain maps to 29–143 (HVLLVDDDVA…EFLARIRVAL (115 aa)). Asp-78 is subject to 4-aspartylphosphate. Residues 155 to 255 (RRSFCFTDWT…ARGAGYFFDA (101 aa)) constitute a DNA-binding region (ompR/PhoB-type).

Post-translationally, phosphorylated by wide host range (WHR) VirA protein.

It is found in the cytoplasm. VirG is required for the positive regulation of at least two vir loci encoded by the Ti plasmid of A.tumefaciens. In Agrobacterium tumefaciens (strain 15955), this protein is Regulatory protein VirG (virG).